Reading from the N-terminus, the 546-residue chain is NRAMP-like transporter smf-2 (546 aa).

Residues 1 to 42 lie on the Cytoplasmic side of the membrane; that stretch reads MPGFQNANISDLAPPAREKTFDDTIAVKIPEDEKNTWFSWRK. Residues 43–63 form a helical membrane-spanning segment; sequence LWAFTGPGFLMSIAYLDPGNI. The Extracellular portion of the chain corresponds to 64–70; the sequence is ESDLQAG. The helical transmembrane segment at 71 to 91 threads the bilayer; that stretch reads AQAEYKLLWVLLVSHIVGMLL. The Cytoplasmic portion of the chain corresponds to 92–119; the sequence is QRMSARLGVVSGKHMAEIAYDYYPLVPR. A helical membrane pass occupies residues 120-140; that stretch reads IILWLMIEIAIVCSDMQEVIG. Over 141–152 the chain is Extracellular; that stretch reads TAIAIYLLSSGK. The helical transmembrane segment at 153-173 threads the bilayer; that stretch reads IPLLVGVLITILDTFTFLFID. The Cytoplasmic portion of the chain corresponds to 174–181; that stretch reads RYGIRKLE. Residues 182 to 202 traverse the membrane as a helical segment; the sequence is FIFVALISTMAISFGYEFVVM. Over 203–228 the chain is Extracellular; sequence KPVLTKVLTGTVVPWCSGCGKEEIIT. The helical transmembrane segment at 229 to 249 threads the bilayer; it reads AISIFGAVIMPHNFYLHSALV. Residues 250–270 are Cytoplasmic-facing; it reads KSRKVDRSSKTRIAEANKYFS. Residues 271–291 form a helical membrane-spanning segment; it reads IESAFALSVSFFINLFVLSVF. At 292 to 334 the chain is on the extracellular side; the sequence is ARGLYQKTNGDVNSMCLSHNDIPDSNVFPNNTSSVTVDLFQGG. Asn-321 carries an N-linked (GlcNAc...) asparagine glycan. The chain crosses the membrane as a helical span at residues 335-355; sequence IYLGCQFGLFAMIIWAIGIFA. Topologically, residues 356 to 386 are cytoplasmic; it reads AGQSSTMTGTYTGQFVMEGFVRISWPKWKRV. The chain crosses the membrane as a helical span at residues 387-407; the sequence is LITRAVAITPTLILCIKAHGI. Residues 408 to 415 lie on the Extracellular side of the membrane; sequence KNLTGMND. Asn-409 carries N-linked (GlcNAc...) asparagine glycosylation. Residues 416–436 traverse the membrane as a helical segment; it reads FLNCVQMVQLPFALIPMITFT. Over 437 to 453 the chain is Cytoplasmic; it reads SSKRIMHNFRTSKPLQY. A helical transmembrane segment spans residues 454–474; it reads FSIICGIITIGINVYFIFQYV. Residues 475–483 are Extracellular-facing; it reads TENFGTGWL. The helical transmembrane segment at 484–504 threads the bilayer; the sequence is IFVIIGPFTLLYIAFILYLAI. Residues 505-546 lie on the Cytoplasmic side of the membrane; that stretch reads YCLVACELMNDTVNLPGFDFHRTLELDAPWITETFVVNDVYF.

Belongs to the NRAMP family. Expressed in dopaminergic neurons (at protein level). Primarily expressed in mc1, mc2 and mc3 epithelial cells of the pharynx and vpil-6 pharyngeal-intestinal valve cells displaying an anterior-posterior expression gradient. Expressed in gonad sheath cells.

The protein resides in the apical cell membrane. Its subcellular location is the cytoplasmic vesicle membrane. Probable divalent metal ion transporter which regulates Mn(2+) uptake. This is NRAMP-like transporter smf-2 from Caenorhabditis elegans.